We begin with the raw amino-acid sequence, 213 residues long: Probable nicotinate-nucleotide adenylyltransferase (213 aa).

It belongs to the NadD family.

It carries out the reaction nicotinate beta-D-ribonucleotide + ATP + H(+) = deamido-NAD(+) + diphosphate. It participates in cofactor biosynthesis; NAD(+) biosynthesis; deamido-NAD(+) from nicotinate D-ribonucleotide: step 1/1. Catalyzes the reversible adenylation of nicotinate mononucleotide (NaMN) to nicotinic acid adenine dinucleotide (NaAD). This Pectobacterium atrosepticum (strain SCRI 1043 / ATCC BAA-672) (Erwinia carotovora subsp. atroseptica) protein is Probable nicotinate-nucleotide adenylyltransferase.